Reading from the N-terminus, the 248-residue chain is MERSTHSTGWTCLPPPPPEPAAPGRGVCAMSTSWRDKQQPSLINFIAAFLAANSYRLNFLSISPDFIFNNGELSVAFIFETNWDCQNEGAVFSRVNMLKRQLKHLYVVVAVPTKEQNESFNRSYHKYGMKLGFPTFVPVTDPEMGFEKIVKIAHALGVCKQQDIISRLKNEREQAVQCTDSFLRVLTSIPGIDNHDANALAQAIGSIEAIAKASKKFILENTDLSTDKAETIVRFFRDPQYYLSPKIN.

The segment covering Met1 to Trp10 has biased composition (polar residues). The disordered stretch occupies residues Met1–Arg25.

It belongs to the ERCC1/RAD10/SWI10 family. In terms of assembly, interacts with SHOC1 (via C-terminus). Interacts with HEI10. As to expression, highly expressed in anthers and pistil during meiosis. Expressed in pollen mother cells (PMCs) during meiosis. Expressed at low levels in roots, shoots, leaves, flowers, and glumes.

It localises to the chromosome. The protein resides in the nucleus. It is found in the cytoplasm. The protein localises to the cell membrane. Functionally, essential for normal crossover (CO) formation during meiosis. Essential component for the formation of class I meiotic COs. Interacts with SHOC1, another meiotic component, to regulate CO formation, possibly by stabilizing the recombination intermediates during meiosis. PTD and SHOC1 may form transient heterotrimeric or heterotetrameric complexes with HEI10 and/or ZIP4 to promote class I COs formation. Does not seem to be involved in early meiotic recombination steps involving double-strand break (DSB) formation, processing, and single-strand invasion. Does not seem to be involved in homologous pairing or synaptonemal complex (SC) assembly. The chain is Protein PARTING DANCERS homolog from Oryza sativa subsp. japonica (Rice).